A 471-amino-acid chain; its full sequence is O-acetyltransferase astG (471 aa).

The protein belongs to the fumigaclavine B O-acetyltransferase family. In terms of assembly, monomer.

It carries out the reaction dideacetyl astellolide A + acetyl-CoA = 14-deacetyl astellolide A + CoA. It catalyses the reaction dideacetyl astellolide B + acetyl-CoA = 14-deacetyl astellolide B + CoA. It participates in secondary metabolite biosynthesis; terpenoid biosynthesis. In terms of biological role, O-acetyltransferase; part of the gene cluster that mediates the biosynthesis of astellolides, drimane-type sesquiterpene esters that show antimicrobial, anti-inflammatory, and anti-tumor activities. The first step in astellolide biosynthesis is performed by the sesquiterpene cyclase astC that catalyzes the formation of drimanyl pyrophosphate from farnesyl pyrophosphate. Drimanyl pyrophosphate is then dephosphorylated by the sesquiterpene phosphatase astI to produce drimanyl monophosphate which is further dephosphorylated to drim-8-ene-11-ol by atsK. Drim-8-ene-11-ol is converted to confertifolin, probably by the cytochrome P450 monooxygenase astD and/or the dehydrogenase astE. The cytochrome P450 monooxygenases astB, astF and astJ then hydroxylate confertifolin at C6, C14, or C15 to form trihydroxy confertifolin. The nonribosomal peptide synthetase astA catalyzes ester bond formation between trihydroxy contifolin and benzoic acid (BA) or 4-hydroxy benzoic acid (4HBA), leading to the formation of dideacetyl astellolides A and B, respectively. Finally, the O-acetyltransferase astG converts dideacetyl astellolides A and B into deacetyl astellolides A and B. The protein is O-acetyltransferase astG of Aspergillus oryzae (strain ATCC 42149 / RIB 40) (Yellow koji mold).